A 1435-amino-acid polypeptide reads, in one-letter code: Gag-Pol polyprotein (1435 aa).

A lipid anchor (N-myristoyl glycine; by host) is attached at G2. Residues 7–31 (VLSGGKLDRWEKIRLRPGGKKKYKL) form an interaction with Gp41 region. An interaction with host CALM1 region spans residues 8 to 43 (LSGGKLDRWEKIRLRPGGKKKYKLKHIVWASRELER). The tract at residues 12–19 (KLDRWEKI) is interaction with host AP3D1. Residues 14-33 (DRWEKIRLRPGGKKKYKLKH) form an interaction with membrane phosphatidylinositol 4,5-bisphosphate and RNA region. The Nuclear export signal motif lies at 16–22 (WEKIRLR). The Nuclear localization signal signature appears at 26–32 (KKKYKLK). The interval 73–77 (EECRS) is interaction with membrane phosphatidylinositol 4,5-bisphosphate. The disordered stretch occupies residues 107–128 (EQNKSKKKAQQAAADTGHSSQV). At Y132 the chain carries Phosphotyrosine; by host. The tract at residues 189 to 227 (NTVGGHQAAMQMLKETINEEAAEWDRVHPVHAGPIAPGQ) is interaction with human PPIA/CYPA and NUP153. Positions 277–363 (YSPTSILDIR…GGPGHKARVL (87 aa)) are dimerization/Multimerization of capsid protein p24. CCHC-type zinc fingers lie at residues 390-407 (VKCF…NCRA) and 411-428 (KGCW…DCTE). The tract at residues 449-481 (SSEQTRANSPTRRELQVWGRDNNSPSEAGADRQ) is disordered. The dimerization of protease stretch occupies residues 489–493 (PQITL). Residues 508–577 (KEALLDTGAD…TPVNIIGRNL (70 aa)) form the Peptidase A2 domain. D513 serves as the catalytic For protease activity; shared with dimeric partner. Dimerization of protease regions lie at residues 537–543 (GIGGFIK) and 576–588 (NLLT…LNFP). The 191-residue stretch at 631–821 (EGKISKIGPE…PPFLWMGYEL (191 aa)) folds into the Reverse transcriptase domain. Mg(2+)-binding residues include D697, D772, and D773. An RT 'primer grip' region spans residues 814–822 (FLWMGYELH). The Tryptophan repeat motif motif lies at 985-1001 (WETWWTEYWQATWIPEW). An RNase H type-1 domain is found at 1021–1144 (IVGAETFYVD…VDKLVSAGIR (124 aa)). Mg(2+)-binding residues include D1030, E1065, D1085, and D1136. Residues 1150 to 1191 (DGIDKAQDEHEKYHSNWRAMASDFNLPPVVAKEIVASCDKCQ) form an Integrase-type zinc finger. H1159, H1163, C1187, and C1190 together coordinate Zn(2+). Positions 1201-1351 (VDCSPGIWQL…SAGERIVDII (151 aa)) constitute an Integrase catalytic domain. 3 residues coordinate Mg(2+): D1211, D1263, and E1299. A DNA-binding region (integrase-type) is located at residues 1370–1417 (FRVYYRDSRNPLWKGPAKLLWKGEGAVVIQDNSDIKVVPRRKAKIIRD).

As to quaternary structure, homotrimer; further assembles as hexamers of trimers. Interacts with gp41 (via C-terminus). Interacts with host CALM1; this interaction induces a conformational change in the Matrix protein, triggering exposure of the myristate group. Interacts with host AP3D1; this interaction allows the polyprotein trafficking to multivesicular bodies during virus assembly. Part of the pre-integration complex (PIC) which is composed of viral genome, matrix protein, Vpr and integrase. In terms of assembly, homodimer; the homodimer further multimerizes as homohexamers or homopentamers. Interacts with human PPIA/CYPA; This interaction stabilizes the capsid. Interacts with human NUP153. Interacts with host PDZD8; this interaction stabilizes the capsid. Interacts with monkey TRIM5; this interaction destabilizes the capsid. Homodimer, whose active site consists of two apposed aspartic acid residues. As to quaternary structure, heterodimer of p66 RT and p51 RT (RT p66/p51). Heterodimerization of RT is essential for DNA polymerase activity. The overall folding of the subdomains is similar in p66 RT and p51 RT but the spatial arrangements of the subdomains are dramatically different. In terms of assembly, homotetramer; may further associate as a homohexadecamer. Part of the pre-integration complex (PIC) which is composed of viral genome, matrix protein, Vpr and integrase. Interacts with human SMARCB1/INI1 and human PSIP1/LEDGF isoform 1. Interacts with human KPNA3; this interaction might play a role in nuclear import of the pre-integration complex. Interacts with human NUP153; this interaction might play a role in nuclear import of the pre-integration complex. Mg(2+) serves as cofactor. Post-translationally, specific enzymatic cleavages by the viral protease yield mature proteins. The protease is released by autocatalytic cleavage. The polyprotein is cleaved during and after budding, this process is termed maturation. Proteolytic cleavage of p66 RT removes the RNase H domain to yield the p51 RT subunit. Nucleocapsid protein p7 might be further cleaved after virus entry. In terms of processing, tyrosine phosphorylated presumably in the virion by a host kinase. Phosphorylation is apparently not a major regulator of membrane association. Phosphorylated possibly by host MAPK1; this phosphorylation is necessary for Pin1-mediated virion uncoating. Post-translationally, methylated by host PRMT6, impairing its function by reducing RNA annealing and the initiation of reverse transcription.

It is found in the host cell membrane. Its subcellular location is the host endosome. It localises to the host multivesicular body. The protein localises to the virion membrane. The protein resides in the host nucleus. It is found in the host cytoplasm. Its subcellular location is the virion. The catalysed reaction is Specific for a P1 residue that is hydrophobic, and P1' variable, but often Pro.. It catalyses the reaction Endohydrolysis of RNA in RNA/DNA hybrids. Three different cleavage modes: 1. sequence-specific internal cleavage of RNA. Human immunodeficiency virus type 1 and Moloney murine leukemia virus enzymes prefer to cleave the RNA strand one nucleotide away from the RNA-DNA junction. 2. RNA 5'-end directed cleavage 13-19 nucleotides from the RNA end. 3. DNA 3'-end directed cleavage 15-20 nucleotides away from the primer terminus.. It carries out the reaction 3'-end directed exonucleolytic cleavage of viral RNA-DNA hybrid.. The enzyme catalyses DNA(n) + a 2'-deoxyribonucleoside 5'-triphosphate = DNA(n+1) + diphosphate. Its activity is regulated as follows. Protease: The viral protease is inhibited by many synthetic protease inhibitors (PIs), such as amprenavir, atazanavir, indinavir, loprinavir, nelfinavir, ritonavir and saquinavir. Use of protease inhibitors in tritherapy regimens permit more ambitious therapeutic strategies. Reverse transcriptase/ribonuclease H: RT can be inhibited either by nucleoside RT inhibitors (NRTIs) or by non nucleoside RT inhibitors (NNRTIs). NRTIs act as chain terminators, whereas NNRTIs inhibit DNA polymerization by binding a small hydrophobic pocket near the RT active site and inducing an allosteric change in this region. Classical NRTIs are abacavir, adefovir (PMEA), didanosine (ddI), lamivudine (3TC), stavudine (d4T), tenofovir (PMPA), zalcitabine (ddC), and zidovudine (AZT). Classical NNRTIs are atevirdine (BHAP U-87201E), delavirdine, efavirenz (DMP-266), emivirine (I-EBU), and nevirapine (BI-RG-587). The tritherapies used as a basic effective treatment of AIDS associate two NRTIs and one NNRTI. Mediates, with Gag polyprotein, the essential events in virion assembly, including binding the plasma membrane, making the protein-protein interactions necessary to create spherical particles, recruiting the viral Env proteins, and packaging the genomic RNA via direct interactions with the RNA packaging sequence (Psi). Gag-Pol polyprotein may regulate its own translation, by the binding genomic RNA in the 5'-UTR. At low concentration, the polyprotein would promote translation, whereas at high concentration, the polyprotein would encapsidate genomic RNA and then shut off translation. Functionally, targets the polyprotein to the plasma membrane via a multipartite membrane-binding signal, that includes its myristoylated N-terminus. Matrix protein is part of the pre-integration complex. Implicated in the release from host cell mediated by Vpu. Binds to RNA. Its function is as follows. Forms the conical core that encapsulates the genomic RNA-nucleocapsid complex in the virion. Most core are conical, with only 7% tubular. The core is constituted by capsid protein hexamer subunits. The core is disassembled soon after virion entry. Host restriction factors such as TRIM5-alpha or TRIMCyp bind retroviral capsids and cause premature capsid disassembly, leading to blocks in reverse transcription. Capsid restriction by TRIM5 is one of the factors which restricts HIV-1 to the human species. Host PIN1 apparently facilitates the virion uncoating. On the other hand, interactions with PDZD8 or CYPA stabilize the capsid. In terms of biological role, encapsulates and protects viral dimeric unspliced genomic RNA (gRNA). Binds these RNAs through its zinc fingers. Acts as a nucleic acid chaperone which is involved in rearangement of nucleic acid secondary structure during gRNA retrotranscription. Also facilitates template switch leading to recombination. As part of the polyprotein, participates in gRNA dimerization, packaging, tRNA incorporation and virion assembly. Aspartyl protease that mediates proteolytic cleavages of Gag and Gag-Pol polyproteins during or shortly after the release of the virion from the plasma membrane. Cleavages take place as an ordered, step-wise cascade to yield mature proteins. This process is called maturation. Displays maximal activity during the budding process just prior to particle release from the cell. Also cleaves Nef and Vif, probably concomitantly with viral structural proteins on maturation of virus particles. Hydrolyzes host EIF4GI and PABP1 in order to shut off the capped cellular mRNA translation. The resulting inhibition of cellular protein synthesis serves to ensure maximal viral gene expression and to evade host immune response. Also mediates cleavage of host YTHDF3. Mediates cleavage of host CARD8, thereby activating the CARD8 inflammasome, leading to the clearance of latent HIV-1 in patient CD4(+) T-cells after viral reactivation; in contrast, HIV-1 can evade CARD8-sensing when its protease remains inactive in infected cells prior to viral budding. Functionally, multifunctional enzyme that converts the viral RNA genome into dsDNA in the cytoplasm, shortly after virus entry into the cell. This enzyme displays a DNA polymerase activity that can copy either DNA or RNA templates, and a ribonuclease H (RNase H) activity that cleaves the RNA strand of RNA-DNA heteroduplexes in a partially processive 3' to 5' endonucleasic mode. Conversion of viral genomic RNA into dsDNA requires many steps. A tRNA(3)-Lys binds to the primer-binding site (PBS) situated at the 5'-end of the viral RNA. RT uses the 3' end of the tRNA primer to perform a short round of RNA-dependent minus-strand DNA synthesis. The reading proceeds through the U5 region and ends after the repeated (R) region which is present at both ends of viral RNA. The portion of the RNA-DNA heteroduplex is digested by the RNase H, resulting in a ssDNA product attached to the tRNA primer. This ssDNA/tRNA hybridizes with the identical R region situated at the 3' end of viral RNA. This template exchange, known as minus-strand DNA strong stop transfer, can be either intra- or intermolecular. RT uses the 3' end of this newly synthesized short ssDNA to perform the RNA-dependent minus-strand DNA synthesis of the whole template. RNase H digests the RNA template except for two polypurine tracts (PPTs) situated at the 5'-end and near the center of the genome. It is not clear if both polymerase and RNase H activities are simultaneous. RNase H probably can proceed both in a polymerase-dependent (RNA cut into small fragments by the same RT performing DNA synthesis) and a polymerase-independent mode (cleavage of remaining RNA fragments by free RTs). Secondly, RT performs DNA-directed plus-strand DNA synthesis using the PPTs that have not been removed by RNase H as primers. PPTs and tRNA primers are then removed by RNase H. The 3' and 5' ssDNA PBS regions hybridize to form a circular dsDNA intermediate. Strand displacement synthesis by RT to the PBS and PPT ends produces a blunt ended, linear dsDNA copy of the viral genome that includes long terminal repeats (LTRs) at both ends. Its function is as follows. Catalyzes viral DNA integration into the host chromosome, by performing a series of DNA cutting and joining reactions. This enzyme activity takes place after virion entry into a cell and reverse transcription of the RNA genome in dsDNA. The first step in the integration process is 3' processing. This step requires a complex comprising the viral genome, matrix protein, Vpr and integrase. This complex is called the pre-integration complex (PIC). The integrase protein removes 2 nucleotides from each 3' end of the viral DNA, leaving recessed CA OH's at the 3' ends. In the second step, the PIC enters cell nucleus. This process is mediated through integrase and Vpr proteins, and allows the virus to infect a non dividing cell. This ability to enter the nucleus is specific of lentiviruses, other retroviruses cannot and rely on cell division to access cell chromosomes. In the third step, termed strand transfer, the integrase protein joins the previously processed 3' ends to the 5' ends of strands of target cellular DNA at the site of integration. The 5'-ends are produced by integrase-catalyzed staggered cuts, 5 bp apart. A Y-shaped, gapped, recombination intermediate results, with the 5'-ends of the viral DNA strands and the 3' ends of target DNA strands remaining unjoined, flanking a gap of 5 bp. The last step is viral DNA integration into host chromosome. This involves host DNA repair synthesis in which the 5 bp gaps between the unjoined strands are filled in and then ligated. Since this process occurs at both cuts flanking the HIV genome, a 5 bp duplication of host DNA is produced at the ends of HIV-1 integration. Alternatively, Integrase may catalyze the excision of viral DNA just after strand transfer, this is termed disintegration. The polypeptide is Gag-Pol polyprotein (gag-pol) (Human immunodeficiency virus type 1 group M subtype B (isolate LW123) (HIV-1)).